Consider the following 216-residue polypeptide: PRA1 family protein B6 (216 aa).

Residue alanine 2 is modified to N-acetylalanine. 5 consecutive transmembrane segments (helical) span residues leucine 83–alanine 103, leucine 105–glycine 125, leucine 135–leucine 155, leucine 159–phenylalanine 179, and isoleucine 186–isoleucine 206.

The protein belongs to the PRA1 family. Interacts with PRA1B1, PRA1B2, PRA1B3, PRA1B4, PRA1B5 and PRA1E. Expressed in hypocotyls, roots, lateral roots, lateral root caps, columella cells, leaves and stomata.

The protein localises to the endoplasmic reticulum membrane. Its function is as follows. May be involved in both secretory and endocytic intracellular trafficking in the endosomal/prevacuolar compartments. The polypeptide is PRA1 family protein B6 (PRA1B6) (Arabidopsis thaliana (Mouse-ear cress)).